A 124-amino-acid polypeptide reads, in one-letter code: Large ribosomal subunit protein bL12 (124 aa).

This sequence belongs to the bacterial ribosomal protein bL12 family. Homodimer. Part of the ribosomal stalk of the 50S ribosomal subunit. Forms a multimeric L10(L12)X complex, where L10 forms an elongated spine to which 2 to 4 L12 dimers bind in a sequential fashion. Binds GTP-bound translation factors.

Its function is as follows. Forms part of the ribosomal stalk which helps the ribosome interact with GTP-bound translation factors. Is thus essential for accurate translation. This Burkholderia lata (strain ATCC 17760 / DSM 23089 / LMG 22485 / NCIMB 9086 / R18194 / 383) protein is Large ribosomal subunit protein bL12.